Here is a 401-residue protein sequence, read N- to C-terminus: Formate-dependent phosphoribosylglycinamide formyltransferase (401 aa).

Residues 22–23 (EL) and E82 contribute to the N(1)-(5-phospho-beta-D-ribosyl)glycinamide site. ATP-binding positions include R115, K157, 162–167 (SSGKGQ), 197–200 (EGFI), and E205. The ATP-grasp domain occupies 120–315 (RLAAETLGLP…EFELHARAIL (196 aa)). Mg(2+) contacts are provided by E274 and E286. N(1)-(5-phospho-beta-D-ribosyl)glycinamide is bound by residues D293, K362, and 369–370 (RR).

The protein belongs to the PurK/PurT family. Homodimer.

It catalyses the reaction N(1)-(5-phospho-beta-D-ribosyl)glycinamide + formate + ATP = N(2)-formyl-N(1)-(5-phospho-beta-D-ribosyl)glycinamide + ADP + phosphate + H(+). Its pathway is purine metabolism; IMP biosynthesis via de novo pathway; N(2)-formyl-N(1)-(5-phospho-D-ribosyl)glycinamide from N(1)-(5-phospho-D-ribosyl)glycinamide (formate route): step 1/1. Functionally, involved in the de novo purine biosynthesis. Catalyzes the transfer of formate to 5-phospho-ribosyl-glycinamide (GAR), producing 5-phospho-ribosyl-N-formylglycinamide (FGAR). Formate is provided by PurU via hydrolysis of 10-formyl-tetrahydrofolate. The polypeptide is Formate-dependent phosphoribosylglycinamide formyltransferase (Cupriavidus pinatubonensis (strain JMP 134 / LMG 1197) (Cupriavidus necator (strain JMP 134))).